The primary structure comprises 192 residues: Thiosulfate reductase electron transfer subunit PhsB (192 aa).

4Fe-4S ferredoxin-type domains follow at residues 8–36, 55–86, and 87–116; these read YVML…VPEG, THFQ…RDEN, and GIVQ…LNPQ. [4Fe-4S] cluster-binding residues include cysteine 17, cysteine 20, cysteine 23, cysteine 27, cysteine 64, cysteine 67, cysteine 72, cysteine 76, cysteine 96, cysteine 99, cysteine 102, cysteine 106, cysteine 123, cysteine 126, cysteine 139, and cysteine 143.

As to quaternary structure, composed of three subunits: PhsA, PhsB and PhsC. Requires [4Fe-4S] cluster as cofactor.

The protein resides in the cell inner membrane. In terms of biological role, component of the PhsABC thiosulfate reductase that catalyzes the reduction of thiosulfate to sulfite and hydrogen sulfide, with menaquinol as the sole electron donor. Proton motive force (PMF) is required to drive transmembrane electron transfer within the reductase. The PhsB subunit transfers electrons between PhsC and PhsA. In Salmonella typhi, this protein is Thiosulfate reductase electron transfer subunit PhsB (phsB).